The sequence spans 661 residues: UvrABC system protein B (661 aa).

One can recognise a Helicase ATP-binding domain in the interval 24–209; the sequence is NGLNKGYRFQ…IFPSYQDEGI (186 aa). 37–44 contributes to the ATP binding site; the sequence is GVTGSGKT. A Beta-hairpin motif is present at residues 90–113; the sequence is YYDYYQPEAYVPTKDLYIEKSADI. The 165-residue stretch at 430 to 594 folds into the Helicase C-terminal domain; sequence DLVNEIVQVK…IIKPLMEDIF (165 aa). Residues 622–657 form the UVR domain; sequence EEYAALLEEEMYKAASELRYEDAARLRDELFKIKEE.

This sequence belongs to the UvrB family. In terms of assembly, forms a heterotetramer with UvrA during the search for lesions. Interacts with UvrC in an incision complex.

The protein resides in the cytoplasm. The UvrABC repair system catalyzes the recognition and processing of DNA lesions. A damage recognition complex composed of 2 UvrA and 2 UvrB subunits scans DNA for abnormalities. Upon binding of the UvrA(2)B(2) complex to a putative damaged site, the DNA wraps around one UvrB monomer. DNA wrap is dependent on ATP binding by UvrB and probably causes local melting of the DNA helix, facilitating insertion of UvrB beta-hairpin between the DNA strands. Then UvrB probes one DNA strand for the presence of a lesion. If a lesion is found the UvrA subunits dissociate and the UvrB-DNA preincision complex is formed. This complex is subsequently bound by UvrC and the second UvrB is released. If no lesion is found, the DNA wraps around the other UvrB subunit that will check the other stand for damage. In Fervidobacterium nodosum (strain ATCC 35602 / DSM 5306 / Rt17-B1), this protein is UvrABC system protein B.